The following is a 564-amino-acid chain: Proline--tRNA ligase (564 aa).

The protein belongs to the class-II aminoacyl-tRNA synthetase family. ProS type 1 subfamily. Homodimer.

The protein localises to the cytoplasm. The enzyme catalyses tRNA(Pro) + L-proline + ATP = L-prolyl-tRNA(Pro) + AMP + diphosphate. In terms of biological role, catalyzes the attachment of proline to tRNA(Pro) in a two-step reaction: proline is first activated by ATP to form Pro-AMP and then transferred to the acceptor end of tRNA(Pro). As ProRS can inadvertently accommodate and process non-cognate amino acids such as alanine and cysteine, to avoid such errors it has two additional distinct editing activities against alanine. One activity is designated as 'pretransfer' editing and involves the tRNA(Pro)-independent hydrolysis of activated Ala-AMP. The other activity is designated 'posttransfer' editing and involves deacylation of mischarged Ala-tRNA(Pro). The misacylated Cys-tRNA(Pro) is not edited by ProRS. This chain is Proline--tRNA ligase, found in Thermosipho melanesiensis (strain DSM 12029 / CIP 104789 / BI429).